The sequence spans 782 residues: uncharacterized protein (782 aa).

A DNA-binding region (zn(2)-C6 fungal-type) is located at residues 22 to 50 (CRECHRLKLKCDRVWPCENCKKRGIPNLC). Disordered stretches follow at residues 105 to 126 (GEKP…DPDH) and 645 to 665 (VPSS…AEKA). A compositionally biased stretch (basic and acidic residues) spans 654 to 665 (SPDDSSMRAEKA).

The protein localises to the nucleus. This is an uncharacterized protein from Schizosaccharomyces pombe (strain 972 / ATCC 24843) (Fission yeast).